The chain runs to 434 residues: MPPTPTTPAATGAAAAVTPEHARPHRMVRFNPRSDRFHTLSFHHVEFWCADAASAAGRFAFALGAPLAARSDLSTGNSAHASQLLRSGSLAFLFTAPYANGCDAATASLPSFSADAARRFSADHGIAVRSVALRVADAAEAFRASRRRGARPAFAPVDLGRGFAFAEVELYGDVVLRFVSHPDGTDVPFLPGFEGVTNPDAVDYGLTRFDHVVGNVPELAPAAAYIAGFTGFHEFAEFTAEDVGTTESGLNSVVLANNSEGVLLPLNEPVHGTKRRSQIQTFLEHHGGPGVQHIAVASSDVLRTLRKMRARSAMGGFDFLPPPLPKYYEGVRRLAGDVLSEAQIKECQELGVLVDRDDQGVLLQIFTKPVGDRPTLFLEMIQRIGCMEKDERGEEYQKGGCGGFGKGNFSELFKSIEDYEKSLEAKQSAAVQGS.

Positions 1–21 (MPPTPTTPAATGAAAAVTPEH) are disordered. Residues 7 to 19 (TPAATGAAAAVTP) show a composition bias toward low complexity. VOC domains are found at residues 41 to 192 (SFHH…FLPG) and 208 to 368 (RFDH…IFTK). Residues histidine 211, histidine 293, and glutamate 379 each coordinate Fe cation.

The protein belongs to the 4HPPD family. Fe cation serves as cofactor.

The protein localises to the cytoplasm. It catalyses the reaction 3-(4-hydroxyphenyl)pyruvate + O2 = homogentisate + CO2. The protein operates within amino-acid degradation; L-phenylalanine degradation; acetoacetate and fumarate from L-phenylalanine: step 3/6. Its pathway is cofactor biosynthesis; prenylquinone biosynthesis. In Hordeum vulgare (Barley), this protein is 4-hydroxyphenylpyruvate dioxygenase.